Reading from the N-terminus, the 188-residue chain is Probable nicotinate-nucleotide adenylyltransferase (188 aa).

It belongs to the NadD family.

It catalyses the reaction nicotinate beta-D-ribonucleotide + ATP + H(+) = deamido-NAD(+) + diphosphate. It functions in the pathway cofactor biosynthesis; NAD(+) biosynthesis; deamido-NAD(+) from nicotinate D-ribonucleotide: step 1/1. Its function is as follows. Catalyzes the reversible adenylation of nicotinate mononucleotide (NaMN) to nicotinic acid adenine dinucleotide (NaAD). In Salinispora tropica (strain ATCC BAA-916 / DSM 44818 / JCM 13857 / NBRC 105044 / CNB-440), this protein is Probable nicotinate-nucleotide adenylyltransferase.